The chain runs to 271 residues: Dermonecrotic toxin LhSicTox-alphaIA2bv (271 aa).

H3 is a catalytic residue. Positions 23 and 25 each coordinate Mg(2+). Disulfide bonds link C43-C49 and C45-C188. Position 83 (D83) interacts with Mg(2+).

Belongs to the arthropod phospholipase D family. Class II subfamily. Mg(2+) is required as a cofactor. As to expression, expressed by the venom gland.

It is found in the secreted. It carries out the reaction an N-(acyl)-sphingosylphosphocholine = an N-(acyl)-sphingosyl-1,3-cyclic phosphate + choline. The enzyme catalyses an N-(acyl)-sphingosylphosphoethanolamine = an N-(acyl)-sphingosyl-1,3-cyclic phosphate + ethanolamine. It catalyses the reaction a 1-acyl-sn-glycero-3-phosphocholine = a 1-acyl-sn-glycero-2,3-cyclic phosphate + choline. The catalysed reaction is a 1-acyl-sn-glycero-3-phosphoethanolamine = a 1-acyl-sn-glycero-2,3-cyclic phosphate + ethanolamine. In terms of biological role, dermonecrotic toxins cleave the phosphodiester linkage between the phosphate and headgroup of certain phospholipids (sphingolipid and lysolipid substrates), forming an alcohol (often choline) and a cyclic phosphate. This toxin acts on sphingomyelin (SM). It may also act on ceramide phosphoethanolamine (CPE), lysophosphatidylcholine (LPC) and lysophosphatidylethanolamine (LPE), but not on lysophosphatidylserine (LPS), and lysophosphatidylglycerol (LPG). It acts by transphosphatidylation, releasing exclusively cyclic phosphate products as second products. Induces dermonecrosis, hemolysis, increased vascular permeability, edema, inflammatory response, and platelet aggregation. In Loxosceles hirsuta (Recluse spider), this protein is Dermonecrotic toxin LhSicTox-alphaIA2bv.